The sequence spans 136 residues: Holo-[acyl-carrier-protein] synthase (136 aa).

Mg(2+) is bound by residues D8 and E57.

Belongs to the P-Pant transferase superfamily. AcpS family. It depends on Mg(2+) as a cofactor.

Its subcellular location is the cytoplasm. The enzyme catalyses apo-[ACP] + CoA = holo-[ACP] + adenosine 3',5'-bisphosphate + H(+). Functionally, transfers the 4'-phosphopantetheine moiety from coenzyme A to a Ser of acyl-carrier-protein. The chain is Holo-[acyl-carrier-protein] synthase from Methylorubrum extorquens (strain CM4 / NCIMB 13688) (Methylobacterium extorquens).